A 221-amino-acid polypeptide reads, in one-letter code: UPF0502 protein PSPTO_2686 (221 aa).

It belongs to the UPF0502 family.

This is UPF0502 protein PSPTO_2686 from Pseudomonas syringae pv. tomato (strain ATCC BAA-871 / DC3000).